A 397-amino-acid polypeptide reads, in one-letter code: DNA-directed RNA polymerase subunit Rpo1C (397 aa).

It belongs to the RNA polymerase beta' chain family. In terms of assembly, part of the RNA polymerase complex.

Its subcellular location is the cytoplasm. It carries out the reaction RNA(n) + a ribonucleoside 5'-triphosphate = RNA(n+1) + diphosphate. Its function is as follows. DNA-dependent RNA polymerase (RNAP) catalyzes the transcription of DNA into RNA using the four ribonucleoside triphosphates as substrates. Forms part of the jaw domain. The chain is DNA-directed RNA polymerase subunit Rpo1C from Methanosarcina acetivorans (strain ATCC 35395 / DSM 2834 / JCM 12185 / C2A).